The chain runs to 205 residues: Ribosomal RNA small subunit methyltransferase G (205 aa).

Residues G76, L81, I127–E128, and R140 each bind S-adenosyl-L-methionine.

The protein belongs to the methyltransferase superfamily. RNA methyltransferase RsmG family.

It localises to the cytoplasm. It catalyses the reaction guanosine(527) in 16S rRNA + S-adenosyl-L-methionine = N(7)-methylguanosine(527) in 16S rRNA + S-adenosyl-L-homocysteine. Its function is as follows. Specifically methylates the N7 position of guanine in position 527 of 16S rRNA. The sequence is that of Ribosomal RNA small subunit methyltransferase G from Francisella tularensis subsp. novicida (strain U112).